The following is an 87-amino-acid chain: Large ribosomal subunit protein bL27 (87 aa).

Residues Met1–Gly22 are disordered.

The protein belongs to the bacterial ribosomal protein bL27 family.

This is Large ribosomal subunit protein bL27 from Akkermansia muciniphila (strain ATCC BAA-835 / DSM 22959 / JCM 33894 / BCRC 81048 / CCUG 64013 / CIP 107961 / Muc).